The following is a 154-amino-acid chain: Large ribosomal subunit protein bL9 (154 aa).

It belongs to the bacterial ribosomal protein bL9 family.

Its function is as follows. Binds to the 23S rRNA. The chain is Large ribosomal subunit protein bL9 from Buchnera aphidicola subsp. Baizongia pistaciae (strain Bp).